The primary structure comprises 317 residues: Porphobilinogen deaminase (317 aa).

The residue at position 245 (Cys-245) is an S-(dipyrrolylmethanemethyl)cysteine.

It belongs to the HMBS family. As to quaternary structure, monomer. Requires dipyrromethane as cofactor.

It carries out the reaction 4 porphobilinogen + H2O = hydroxymethylbilane + 4 NH4(+). It participates in porphyrin-containing compound metabolism; protoporphyrin-IX biosynthesis; coproporphyrinogen-III from 5-aminolevulinate: step 2/4. It functions in the pathway porphyrin-containing compound metabolism; chlorophyll biosynthesis. Tetrapolymerization of the monopyrrole PBG into the hydroxymethylbilane pre-uroporphyrinogen in several discrete steps. This Synechococcus sp. (strain RCC307) protein is Porphobilinogen deaminase.